The primary structure comprises 1199 residues: Metabotropic glutamate receptor 1 (1199 aa).

The N-terminal stretch at 1 to 18 (MVRLLLIFFPMIFLEMSI) is a signal peptide. At 19-592 (LPRMPDRKVL…VRYLEWSDIE (574 aa)) the chain is on the extracellular side. C67 and C109 are oxidised to a cystine. Y74 serves as a coordination point for L-glutamate. Residue N98 is glycosylated (N-linked (GlcNAc...) asparagine). Residues S165 and 186–188 (SAT) contribute to the L-glutamate site. The N-linked (GlcNAc...) asparagine glycan is linked to N223. Y236 is a binding site for L-glutamate. A disulfide bridge links C289 with C291. Residue D318 participates in L-glutamate binding. C378 and C394 are disulfide-bonded. N-linked (GlcNAc...) asparagine glycosylation is present at N397. K409 is a binding site for L-glutamate. The cysteines at positions 432 and 439 are disulfide-linked. Residue N515 is glycosylated (N-linked (GlcNAc...) asparagine). Residues 593-615 (SIIAIAFSCLGILVTLFVTLIFV) form a helical membrane-spanning segment. The Cytoplasmic portion of the chain corresponds to 616–629 (LYRDTPVVKSSSRE). Residues 630–650 (LCYIILAGIFLGYVCPFTLIA) form a helical membrane-spanning segment. Residues 651 to 658 (KPTTTSCY) lie on the Extracellular side of the membrane. A disulfide bridge connects residues C657 and C746. Residues 659-680 (LQRLLVGLSSAMCYSALVTKTN) traverse the membrane as a helical segment. Residues 681–703 (RIARILAGSKKKICTRKPRFMSA) are Cytoplasmic-facing. A helical membrane pass occupies residues 704-727 (WAQVIIASILISVQLTLVVTLIIM). Residues 728-750 (EPPMPILSYPSIKEVYLICNTSN) are Extracellular-facing. The helical transmembrane segment at 751–772 (LGVVAPVGYNGLLIMSCTYYAF) threads the bilayer. Topologically, residues 773–785 (KTRNVPANFNEAK) are cytoplasmic. A helical transmembrane segment spans residues 786-807 (YIAFTMYTTCIIWLAFVPIYFG). The Extracellular portion of the chain corresponds to 808 to 815 (SNYKIITT). Residues 816 to 840 (CFAVSLSVTVALGCMFTPKMYIIIA) form a helical membrane-spanning segment. Residues 841–1199 (KPERNVRSAF…RDYKQSSSTL (359 aa)) lie on the Cytoplasmic side of the membrane. S853 is subject to Phosphoserine. A Phosphothreonine modification is found at T871. Disordered stretches follow at residues 882 to 905 (GAGN…QAPK), 959 to 1036 (EEDN…QPKS), and 1056 to 1081 (HAVL…PPQH). The segment covering 885-895 (NANSNGKSVSW) has biased composition (polar residues). Phosphoserine is present on residues S894 and S969. Over residues 1012–1033 (GLPPPLPQQQPQQPPPQQPPQQ) the composition is skewed to pro residues. At S1098 the chain carries Phosphoserine. Residues 1120–1177 (EREGNTEEDELEEEEDLPTASKLTPEDSPALTPPSPFRDSVASGSSVPSSPVSESVLC) are disordered. Over residues 1125-1136 (TEEDELEEEEDL) the composition is skewed to acidic residues. Position 1147 is a phosphoserine (S1147). T1151 carries the phosphothreonine modification. A Phosphoserine modification is found at S1154. A compositionally biased stretch (low complexity) spans 1159-1175 (SVASGSSVPSSPVSESV).

This sequence belongs to the G-protein coupled receptor 3 family. As to quaternary structure, homodimer; disulfide-linked. The PPXXF motif binds HOMER1, HOMER2 and HOMER3. Interacts with TAMALIN. Interacts with RYR1, RYR2, ITPR1, SHANK1 and SHANK3. Interacts with SIAH1. As to expression, predominantly expressed in cerebellar Purkinje cells, CA2-CA3 pyramidal cells of the hippocampus, and mitral and tufted cells of the olfactory bulb.

Its subcellular location is the cell membrane. It localises to the postsynaptic cell membrane. The protein localises to the cell projection. It is found in the dendrite. In terms of biological role, G-protein coupled receptor for glutamate. Ligand binding causes a conformation change that triggers signaling via guanine nucleotide-binding proteins (G proteins) and modulates the activity of down-stream effectors. Signaling activates a phosphatidylinositol-calcium second messenger system. May participate in the central action of glutamate in the CNS, such as long-term potentiation in the hippocampus and long-term depression in the cerebellum. May function in the light response in the retina. Induces GRID1 and GRID2 cation-channel activation via GNAQ-PLC-PKC pathway in dopaminergic neurons and cerebellar Purkinje cell, respectively. The polypeptide is Metabotropic glutamate receptor 1 (Grm1) (Rattus norvegicus (Rat)).